The following is a 427-amino-acid chain: Serine--tRNA ligase (427 aa).

An L-serine-binding site is contributed by T231–E233. R262–E264 lines the ATP pocket. An L-serine-binding site is contributed by E285. ATP is bound at residue E349–S352. S385 is a binding site for L-serine.

Belongs to the class-II aminoacyl-tRNA synthetase family. Type-1 seryl-tRNA synthetase subfamily. Homodimer. The tRNA molecule binds across the dimer.

The protein resides in the cytoplasm. The enzyme catalyses tRNA(Ser) + L-serine + ATP = L-seryl-tRNA(Ser) + AMP + diphosphate + H(+). It carries out the reaction tRNA(Sec) + L-serine + ATP = L-seryl-tRNA(Sec) + AMP + diphosphate + H(+). It participates in aminoacyl-tRNA biosynthesis; selenocysteinyl-tRNA(Sec) biosynthesis; L-seryl-tRNA(Sec) from L-serine and tRNA(Sec): step 1/1. Functionally, catalyzes the attachment of serine to tRNA(Ser). Is also able to aminoacylate tRNA(Sec) with serine, to form the misacylated tRNA L-seryl-tRNA(Sec), which will be further converted into selenocysteinyl-tRNA(Sec). This is Serine--tRNA ligase from Allorhizobium ampelinum (strain ATCC BAA-846 / DSM 112012 / S4) (Agrobacterium vitis (strain S4)).